The chain runs to 387 residues: Succinate--CoA ligase [ADP-forming] subunit beta (387 aa).

The region spanning 9–236 (KELFAKHNVP…RDATDPLELK (228 aa)) is the ATP-grasp domain. Residues Lys45, 52-54 (GRG), Ser94, and Glu99 contribute to the ATP site. Mg(2+)-binding residues include Asn191 and Asp205. Substrate is bound by residues Asn256 and 318–320 (GIT).

This sequence belongs to the succinate/malate CoA ligase beta subunit family. As to quaternary structure, heterotetramer of two alpha and two beta subunits. Requires Mg(2+) as cofactor.

It catalyses the reaction succinate + ATP + CoA = succinyl-CoA + ADP + phosphate. It carries out the reaction GTP + succinate + CoA = succinyl-CoA + GDP + phosphate. The protein operates within carbohydrate metabolism; tricarboxylic acid cycle; succinate from succinyl-CoA (ligase route): step 1/1. Its function is as follows. Succinyl-CoA synthetase functions in the citric acid cycle (TCA), coupling the hydrolysis of succinyl-CoA to the synthesis of either ATP or GTP and thus represents the only step of substrate-level phosphorylation in the TCA. The beta subunit provides nucleotide specificity of the enzyme and binds the substrate succinate, while the binding sites for coenzyme A and phosphate are found in the alpha subunit. This is Succinate--CoA ligase [ADP-forming] subunit beta from Mycobacterium sp. (strain JLS).